The following is a 134-amino-acid chain: uncharacterized protein (134 aa).

Belongs to the ycf68 family.

The protein localises to the plastid. Its subcellular location is the chloroplast. This is an uncharacterized protein from Saccharum hybrid (Sugarcane).